Consider the following 420-residue polypeptide: Calreticulin (420 aa).

An N-terminal signal peptide occupies residues 1–18; that stretch reads MKWGVVAVLATLVVAASA. A disulfide bridge connects residues cysteine 106 and cysteine 140. The an alpha-D-glucoside site is built by tyrosine 110, lysine 112, tyrosine 131, and aspartate 138. A run of 7 repeats spans residues 194–205, 213–224, 230–241, 248–259, 263–273, 277–287, and 291–301. The segment at 194-259 is 4 X approximate repeats; it reads VASGSLYEDW…DAKKPEDWDD (66 aa). A compositionally biased stretch (basic and acidic residues) spans 210-220; it reads TIKDPKASKPE. Residues 210–272 form a disordered region; sequence TIKDPKASKP…GTWEPPMIPN (63 aa). The span at 221-230 shows a compositional bias: acidic residues; it reads DWDEREEIAD. The tract at residues 263–301 is 3 X approximate repeats; the sequence is GTWEPPMIPNPEYKGEWKAKMIKNPAYKGIWVAPDIDNP. Residue glutamate 321 coordinates an alpha-D-glucoside. Residues 357 to 376 show a composition bias toward basic and acidic residues; the sequence is EEKAMFDKVKKEEDEKKAKD. The disordered stretch occupies residues 357–420; the sequence is EEKAMFDKVK…EEEESGHDEL (64 aa). Acidic residues-rich tracts occupy residues 385 to 398 and 411 to 420; these read EAAEEEDDEYEDKE and EEEESGHDEL. The short motif at 417–420 is the Prevents secretion from ER element; it reads HDEL.

The protein belongs to the calreticulin family.

It is found in the endoplasmic reticulum lumen. In terms of biological role, molecular calcium-binding chaperone promoting folding, oligomeric assembly and quality control in the ER via the calreticulin/calnexin cycle. This lectin may interact transiently with almost all of the monoglucosylated glycoproteins that are synthesized in the ER. This Chlamydomonas reinhardtii (Chlamydomonas smithii) protein is Calreticulin.